Reading from the N-terminus, the 363-residue chain is Putative agmatine deiminase (363 aa).

A compositionally biased stretch (polar residues) spans 1 to 10; it reads MTKQLSTSPK. Residues 1–20 are disordered; sequence MTKQLSTSPKQDGFRMPAEH. The active-site Amidino-cysteine intermediate is Cys355.

This sequence belongs to the agmatine deiminase family.

The catalysed reaction is agmatine + H2O = N-carbamoylputrescine + NH4(+). The sequence is that of Putative agmatine deiminase from Photobacterium profundum (strain SS9).